A 467-amino-acid polypeptide reads, in one-letter code: Glutamate--tRNA ligase 1 (467 aa).

The 'HIGH' region motif lies at 8 to 18 (PSPTGHLHVGG). Residues 230–234 (PLSKR) carry the 'KMSKS' region motif. Position 233 (Lys233) interacts with ATP.

It belongs to the class-I aminoacyl-tRNA synthetase family. Glutamate--tRNA ligase type 1 subfamily. As to quaternary structure, monomer.

Its subcellular location is the cytoplasm. The enzyme catalyses tRNA(Glu) + L-glutamate + ATP = L-glutamyl-tRNA(Glu) + AMP + diphosphate. Functionally, catalyzes the attachment of glutamate to tRNA(Glu) in a two-step reaction: glutamate is first activated by ATP to form Glu-AMP and then transferred to the acceptor end of tRNA(Glu). In Petrotoga mobilis (strain DSM 10674 / SJ95), this protein is Glutamate--tRNA ligase 1.